The chain runs to 325 residues: NADH-quinone oxidoreductase subunit H (325 aa).

8 consecutive transmembrane segments (helical) span residues Ile-11–Phe-31, Val-81–Val-101, Ile-114–Gly-134, Leu-154–Phe-174, Leu-186–Val-206, Phe-237–Phe-257, Leu-265–Ile-285, and Val-304–Ala-324.

Belongs to the complex I subunit 1 family. In terms of assembly, NDH-1 is composed of 13 different subunits. Subunits NuoA, H, J, K, L, M, N constitute the membrane sector of the complex.

Its subcellular location is the cell inner membrane. The catalysed reaction is a quinone + NADH + 5 H(+)(in) = a quinol + NAD(+) + 4 H(+)(out). Functionally, NDH-1 shuttles electrons from NADH, via FMN and iron-sulfur (Fe-S) centers, to quinones in the respiratory chain. The immediate electron acceptor for the enzyme in this species is believed to be ubiquinone. Couples the redox reaction to proton translocation (for every two electrons transferred, four hydrogen ions are translocated across the cytoplasmic membrane), and thus conserves the redox energy in a proton gradient. This subunit may bind ubiquinone. The polypeptide is NADH-quinone oxidoreductase subunit H (Klebsiella pneumoniae (strain 342)).